Consider the following 340-residue polypeptide: Sulfotransferase 2B1 (340 aa).

A 3'-phosphoadenylyl sulfate-binding site is contributed by 67-72; the sequence is KSGTNW. Residues Trp-95 and Trp-100 each coordinate substrate. The Proton acceptor role is filled by His-122. Residues Arg-144, Ser-152, Tyr-207, 241-246, and 271-273 each bind 3'-phosphoadenylyl sulfate; these read SAFAAM and RKG. The tract at residues 301–340 is disordered; sequence LPSFPWDRSAEDGSPDGETEPSPSPSPGLASDDPNPGSSQ.

It belongs to the sulfotransferase 1 family. In terms of tissue distribution, isoform 1 is expressed in skin and testis. Higher level of isoform 2 expressed in skin and intestine, moderate level in the kidney, low level in liver, stomach and placenta.

The protein resides in the cytoplasm. It is found in the cytosol. Its subcellular location is the microsome. The protein localises to the nucleus. The catalysed reaction is an alcohol + 3'-phosphoadenylyl sulfate = an alkyl sulfate + adenosine 3',5'-bisphosphate + H(+). It carries out the reaction pregnenolone + 3'-phosphoadenylyl sulfate = pregnenolone sulfate + adenosine 3',5'-bisphosphate + H(+). It catalyses the reaction 3beta-hydroxyandrost-5-en-17-one + 3'-phosphoadenylyl sulfate = dehydroepiandrosterone 3-sulfate + adenosine 3',5'-bisphosphate + H(+). The enzyme catalyses cholesterol + 3'-phosphoadenylyl sulfate = cholesterol sulfate + adenosine 3',5'-bisphosphate + H(+). In terms of biological role, sulfotransferase that utilizes 3'-phospho-5'-adenylyl sulfate (PAPS) as sulfonate donor to catalyze the sulfate conjugation. Sulfonation increases the water solubility of most compounds, and therefore their renal excretion, but it can also result in bioactivation to form active metabolites. Sulfonates cholesterol. Catalyzes sulfation of the 3beta-hydroxyl groups of steroids, such as, pregnenolone and dehydroepiandrosterone (DHEA). Conjugates efficiently cholesterol but has a greater affinity for pregnenolone sulfation. Does not show high activity with DHEA. Plays a role in epidermal cholesterol metabolism and in the regulation of epidermal proliferation and differentiation. Prefers pregnenolone over DHEA as a substrate and does not sulfate cholesterol. This chain is Sulfotransferase 2B1, found in Rattus norvegicus (Rat).